The primary structure comprises 257 residues: Zinc transporter ZupT (257 aa).

Transmembrane regions (helical) follow at residues 5–25 (LILT…GVLG), 32–52 (LLAF…LMEM), and 61–81 (GMSP…YFGL). N120 and E123 together coordinate Fe(2+). E123 and H148 together coordinate Zn(2+). 4 helical membrane-spanning segments follow: residues 137–157 (LGFG…LAVA), 171–191 (ILWA…AWLI), 195–215 (MISP…MVAL), and 236–256 (GVLC…TAGI). Fe(2+) contacts are provided by N149, E152, and E181. E152 contacts Zn(2+).

This sequence belongs to the ZIP transporter (TC 2.A.5) family. ZupT subfamily.

Its subcellular location is the cell inner membrane. The catalysed reaction is Zn(2+)(in) = Zn(2+)(out). Mediates zinc uptake. May also transport other divalent cations. This Escherichia coli O7:K1 (strain IAI39 / ExPEC) protein is Zinc transporter ZupT.